A 378-amino-acid polypeptide reads, in one-letter code: N-acetyldiaminopimelate deacetylase (378 aa).

Asp-65 is a catalytic residue. The Proton acceptor role is filled by Glu-124.

Belongs to the peptidase M20A family. N-acetyldiaminopimelate deacetylase subfamily.

The catalysed reaction is N-acetyl-(2S,6S)-2,6-diaminopimelate + H2O = (2S,6S)-2,6-diaminopimelate + acetate. It functions in the pathway amino-acid biosynthesis; L-lysine biosynthesis via DAP pathway; LL-2,6-diaminopimelate from (S)-tetrahydrodipicolinate (acetylase route): step 3/3. Its function is as follows. Catalyzes the conversion of N-acetyl-diaminopimelate to diaminopimelate and acetate. This chain is N-acetyldiaminopimelate deacetylase, found in Anoxybacillus flavithermus (strain DSM 21510 / WK1).